Reading from the N-terminus, the 464-residue chain is L-cystine uptake protein TcyP (464 aa).

10 helical membrane-spanning segments follow: residues 3-23, 34-54, 73-93, 107-127, 184-204, 225-245, 263-283, 347-367, 371-391, and 395-415; these read TLLV…LYYM, VFTA…IYEP, YVKL…ISAF, GLII…GIAA, PTST…FIGV, IVMR…LALM, FVLA…LLIA, AGIY…IDPL, FILT…GVGG, and FAAL…ALVI.

The protein belongs to the dicarboxylate/amino acid:cation symporter (DAACS) (TC 2.A.23) family.

It is found in the membrane. Mediates uptake of L-cystine, the oxidized form of L-cysteine. This chain is L-cystine uptake protein TcyP, found in Bacillus thuringiensis (strain Al Hakam).